Reading from the N-terminus, the 700-residue chain is Calpain-2 catalytic subunit (700 aa).

Ala-2 carries the N-acetylalanine modification. The propeptide at 2 to 19 is anchors to the small subunit; it reads AGIAAKLVKDREAAEGLG. A Calpain catalytic domain is found at 45–344; the sequence is LFQDPSFPAI…YSRLEICNLT (300 aa). Ca(2+) contacts are provided by Ile-89, Gly-91, and Asp-96. Residue Cys-105 is part of the active site. Positions 175, 229, and 230 each coordinate Ca(2+). Residues His-262 and Asn-286 contribute to the active site. Ca(2+) contacts are provided by Glu-292, Asp-299, and Glu-323. Residues 345–514 are domain III; sequence PDTLTSDTYK…KKADYQAVDD (170 aa). The interval 515-529 is linker; sequence EIEANLEEFDISEDD. Residues 530-700 form a domain IV region; it reads IDDGFRRLFA…LISWLCFSVL (171 aa). 16 residues coordinate Ca(2+): Ala-542, Asp-545, Glu-547, Glu-552, Asp-585, Asp-587, Ser-589, Lys-591, Glu-596, Asp-615, Asp-617, Ser-619, Thr-621, Glu-626, Asp-658, and Asn-661. EF-hand domains follow at residues 572-605 and 602-637; these read FSIE…TKIQ and TKIQ…AGFK. In terms of domain architecture, EF-hand 3 spans 667 to 700; the sequence is VRLETLFKIFKQLDPENTGTIELDLISWLCFSVL.

It belongs to the peptidase C2 family. Forms a heterodimer with a small (regulatory) subunit (CAPNS1). Interacts with CPEB3; this leads to cleavage of CPEB3. Ca(2+) is required as a cofactor.

The protein resides in the cytoplasm. The protein localises to the cell membrane. The catalysed reaction is Broad endopeptidase specificity.. Activated by 200-1000 micromolar concentrations of calcium and inhibited by calpastatin. Its function is as follows. Calcium-regulated non-lysosomal thiol-protease which catalyzes limited proteolysis of substrates involved in cytoskeletal remodeling and signal transduction. Proteolytically cleaves MYOC at 'Arg-226'. Proteolytically cleaves CPEB3 following neuronal stimulation which abolishes CPEB3 translational repressor activity, leading to translation of CPEB3 target mRNAs. The chain is Calpain-2 catalytic subunit (CAPN2) from Macaca fascicularis (Crab-eating macaque).